Consider the following 797-residue polypeptide: GDH/6PGL endoplasmic bifunctional protein (797 aa).

The first 24 residues, 1-24, serve as a signal peptide directing secretion; sequence MKCPGVWGMLTVTMCVVFLGCPQA. Residue glutamine 25 is modified to Pyrrolidone carboxylic acid. The segment at 25 to 531 is hexose-6-phosphate dehydrogenase; that stretch reads QELQGHVSVI…SGSHLSFSLG (507 aa). Residues 37–44 and tyrosine 154 each bind NADP(+); that span reads GATGDLAK. N-linked (GlcNAc...) asparagine glycosylation occurs at asparagine 162. Lysine 179 is an NADP(+) binding site. D-glucose 6-phosphate contacts are provided by residues lysine 179, 209 to 213, glutamate 248, and aspartate 267; that span reads HYLGK. Lysine 213 carries the post-translational modification N6-succinyllysine. The active-site Proton acceptor is histidine 272. N-linked (GlcNAc...) asparagine glycosylation is present at asparagine 287. 2 residues coordinate D-glucose 6-phosphate: lysine 365 and arginine 370. An NADP(+)-binding site is contributed by arginine 375. Positions 532–545 are linker; the sequence is QPEQLVPGPGSTPR. The interval 546–797 is 6-phosphogluconolactonase; the sequence is PSDFQVLGAK…WYMDYEAFLG (252 aa). Residue tryptophan 623 participates in NADP(+) binding. A glycan (N-linked (GlcNAc...) asparagine) is linked at asparagine 689.

In the N-terminal section; belongs to the glucose-6-phosphate dehydrogenase family. It in the C-terminal section; belongs to the glucosamine/galactosamine-6-phosphate isomerase family. 6-phosphogluconolactonase subfamily. As to quaternary structure, homodimer.

It localises to the endoplasmic reticulum lumen. It carries out the reaction D-glucose 6-phosphate + NAD(+) = 6-phospho-D-glucono-1,5-lactone + NADH + H(+). The catalysed reaction is D-glucose 6-phosphate + NADP(+) = 6-phospho-D-glucono-1,5-lactone + NADPH + H(+). It catalyses the reaction 6-phospho-D-glucono-1,5-lactone + H2O = 6-phospho-D-gluconate + H(+). The enzyme catalyses 2-deoxy-D-glucose 6-phosphate + NAD(+) = 2-deoxy-6-phospho-D-glucono-1,5-lactone + NADH + H(+). It carries out the reaction 2-deoxy-D-glucose 6-phosphate + NADP(+) = 2-deoxy-6-phospho-D-glucono-1,5-lactone + NADPH + H(+). The catalysed reaction is D-galactose 6-phosphate + NADP(+) = 6-phospho-D-galactono-1,5-lactone + NADPH + H(+). It catalyses the reaction D-galactose 6-phosphate + NAD(+) = 6-phospho-D-galactono-1,5-lactone + NADH + H(+). The enzyme catalyses D-glucosamine 6-phosphate + NADP(+) = 2-amino-2-deoxy-6-phospho-D-glucono-1,5-lactone + NADPH + 2 H(+). It carries out the reaction D-glucose + NAD(+) = D-glucono-1,5-lactone + NADH + H(+). The catalysed reaction is D-glucose + NADP(+) = D-glucono-1,5-lactone + NADPH + H(+). It catalyses the reaction D-glucose 6-sulfate + NADP(+) = 6-sulfo-D-glucono-1,5-lactone + NADPH + H(+). It functions in the pathway carbohydrate degradation; pentose phosphate pathway; D-ribulose 5-phosphate from D-glucose 6-phosphate (oxidative stage). It participates in carbohydrate degradation; pentose phosphate pathway; D-ribulose 5-phosphate from D-glucose 6-phosphate (oxidative stage): step 2/3. Functionally, bifunctional enzyme localized in the lumen of the endoplasmic reticulum that catalyzes the first two steps of the oxidative branch of the pentose phosphate pathway/shunt, an alternative to glycolysis and a major source of reducing power and metabolic intermediates for biosynthetic processes. Has a hexose-6-phosphate dehydrogenase activity, with broad substrate specificity compared to glucose-6-phosphate 1-dehydrogenase/G6PD, and catalyzes the first step of the pentose phosphate pathway. In addition, acts as a 6-phosphogluconolactonase and catalyzes the second step of the pentose phosphate pathway. May have a dehydrogenase activity for alternative substrates including glucosamine 6-phosphate and glucose 6-sulfate. The main function of this enzyme is to provide reducing equivalents such as NADPH to maintain the adequate levels of reductive cofactors in the oxidizing environment of the endoplasmic reticulum. By producing NADPH that is needed by reductases of the lumen of the endoplasmic reticulum like corticosteroid 11-beta-dehydrogenase isozyme 1/HSD11B1, indirectly regulates their activity. This chain is GDH/6PGL endoplasmic bifunctional protein, found in Oryctolagus cuniculus (Rabbit).